A 128-amino-acid chain; its full sequence is Small ribosomal subunit protein uS11 (128 aa).

Belongs to the universal ribosomal protein uS11 family. In terms of assembly, part of the 30S ribosomal subunit. Interacts with proteins S7 and S18. Binds to IF-3.

Its function is as follows. Located on the platform of the 30S subunit, it bridges several disparate RNA helices of the 16S rRNA. Forms part of the Shine-Dalgarno cleft in the 70S ribosome. The polypeptide is Small ribosomal subunit protein uS11 (Desulfosudis oleivorans (strain DSM 6200 / JCM 39069 / Hxd3) (Desulfococcus oleovorans)).